A 131-amino-acid chain; its full sequence is U-scoloptoxin-Er5e (131 aa).

The N-terminal stretch at 1–22 (MKTNCEFPLLCLLIVLVANVEG) is a signal peptide. Positions 23 to 94 (EVEDNELKMV…KRLWRNWERR (72 aa)) are excised as a propeptide. 3 RLWRNWE repeats span residues 34–40 (RLWRNWE), 61–67 (RLWRNWE), and 86–92 (RLWRNWE). At Gln-95 the chain carries Pyrrolidone carboxylic acid. An RLWRNWE 4; approximate repeat occupies 107-113 (ELWRNWE). The propeptide occupies 112-131 (WEDLKRRQVVDLNDEQKTTG).

This sequence belongs to the scoloptoxin-08 family. In terms of tissue distribution, expressed by the venom gland.

Its subcellular location is the secreted. This Ethmostigmus rubripes (Giant centipede) protein is U-scoloptoxin-Er5e.